A 332-amino-acid chain; its full sequence is Malate dehydrogenase (332 aa).

NAD(+) contacts are provided by residues 11-16 (GAGNVG) and D35. Substrate is bound by residues R97 and R103. Residues N110 and 133–135 (VTN) contribute to the NAD(+) site. Substrate contacts are provided by N135 and R166. H190 acts as the Proton acceptor in catalysis.

It belongs to the LDH/MDH superfamily. MDH type 3 family.

The enzyme catalyses (S)-malate + NAD(+) = oxaloacetate + NADH + H(+). Its function is as follows. Catalyzes the reversible oxidation of malate to oxaloacetate. This is Malate dehydrogenase from Hydrogenobaculum sp. (strain Y04AAS1).